Reading from the N-terminus, the 335-residue chain is Matrix protein (335 aa).

The protein belongs to the morbillivirus/respirovirus/rubulavirus M protein family. Homodimer. Dimerization is critical for virion formation. Interacts with host ANP32B.

Its subcellular location is the virion. The protein localises to the host cell membrane. In terms of biological role, the M protein has a crucial role in virus assembly and interacts with the RNP complex as well as with the viral membrane. Associates with phosphatidylserine (PS) and phosphatidylinositol 4,5-bisphosphate (PIP2) at the plasma membrane. Interaction with PIP2 triggers matrix protein lattice polymerization. Matrix proteins induce host membrane deformation and curvature necessary for virion assembly/budding. The protein is Matrix protein (M) of Measles virus (strain Edmonston-AIK-C vaccine) (MeV).